The sequence spans 621 residues: MSNQEYTFQTEINQLLDLMIHSLYSNKEIFLRELISNASDALDKLNYLMLTDEKLKGLNTTPSIHLSFDSQKKTLTIKDNGIGMDKSDLIEHLGTIAKSGTKSFLSALSGDKKKDSALIGQFGVGFYSAFMVASKIVVQTKKVTSHQAYAWVSDGKGKFEISECVKEEQGTEITLFLKEEDSHFASRWEIDSVVKKYSEHIPFPIFLTYTDTKFEGEGDNKKEVKEEKCDQINQASALWKMNKSELKEKDYKDFYQSFAHDNSEPLSYIHNKVEGSLEYTTLFYIPSKAPFDLFRVDYKSGVKLYVKRVFITDDDKELLPSYLRFVKGVIDSEDLPLNVSREILQQNKILANIRSASVKKILSEIERLSKDNKNYHKFYEPFGKVLKEGLYGDFENKEKLLELLRFYSKDKGEWISLKEYKENLKENQKSIYYLLGENLDLLKASPLLEKYAQKGYDVLLLSDEIDAFVMPGVNEYDKTPFRDASHSESLKELGLAEIHDEVKDQFKDLIKAFEENLKDEIKGVELSGHLTSAVALIGDEPNAMMANWMRQMGQSVPESKKTLELNPNHAILQKLLKCEDKEQLSAFIWLLYDGAKLLEKGALKDAKSFNERLNSVLLKAL.

Residues 1–341 (MSNQEYTFQT…SEDLPLNVSR (341 aa)) form an a; substrate-binding region. Residues 342 to 547 (EILQQNKILA…GDEPNAMMAN (206 aa)) are b. The c stretch occupies residues 548 to 621 (WMRQMGQSVP…RLNSVLLKAL (74 aa)).

The protein belongs to the heat shock protein 90 family. Homodimer.

It localises to the cytoplasm. In terms of biological role, molecular chaperone. Has ATPase activity. In Helicobacter pylori (strain J99 / ATCC 700824) (Campylobacter pylori J99), this protein is Chaperone protein HtpG.